Here is a 90-residue protein sequence, read N- to C-terminus: Probable Fe(2+)-trafficking protein (90 aa).

This sequence belongs to the Fe(2+)-trafficking protein family.

Its function is as follows. Could be a mediator in iron transactions between iron acquisition and iron-requiring processes, such as synthesis and/or repair of Fe-S clusters in biosynthetic enzymes. The chain is Probable Fe(2+)-trafficking protein from Delftia acidovorans (strain DSM 14801 / SPH-1).